Reading from the N-terminus, the 133-residue chain is uncharacterized protein (133 aa).

An HIT domain is found at I3–F106. The Histidine triad motif signature appears at H90–H94.

This is an uncharacterized protein from Mycobacterium tuberculosis (strain ATCC 25618 / H37Rv).